The following is a 420-amino-acid chain: ATP-dependent Clp protease ATP-binding subunit ClpX (420 aa).

The region spanning 4–57 is the ClpX-type ZB domain; it reads KTPGNNGKQKLFCSFCGKEQDAVKRLVAGPGVYICDECISLCNEIIAEDHEHSH. Positions 16, 19, 38, and 41 each coordinate Zn(2+). Residue 122–129 participates in ATP binding; it reads PTGSGKTL.

This sequence belongs to the ClpX chaperone family. As to quaternary structure, component of the ClpX-ClpP complex. Forms a hexameric ring that, in the presence of ATP, binds to fourteen ClpP subunits assembled into a disk-like structure with a central cavity, resembling the structure of eukaryotic proteasomes.

ATP-dependent specificity component of the Clp protease. It directs the protease to specific substrates. Can perform chaperone functions in the absence of ClpP. This chain is ATP-dependent Clp protease ATP-binding subunit ClpX, found in Leptospira interrogans serogroup Icterohaemorrhagiae serovar copenhageni (strain Fiocruz L1-130).